The primary structure comprises 187 residues: Threonylcarbamoyl-AMP synthase (187 aa).

The YrdC-like domain occupies 3–187 (QVLPADAAEL…ARSGTVIREG (185 aa)).

The protein belongs to the SUA5 family. TsaC subfamily.

Its subcellular location is the cytoplasm. The catalysed reaction is L-threonine + hydrogencarbonate + ATP = L-threonylcarbamoyladenylate + diphosphate + H2O. Functionally, required for the formation of a threonylcarbamoyl group on adenosine at position 37 (t(6)A37) in tRNAs that read codons beginning with adenine. Catalyzes the conversion of L-threonine, HCO(3)(-)/CO(2) and ATP to give threonylcarbamoyl-AMP (TC-AMP) as the acyladenylate intermediate, with the release of diphosphate. In Shewanella pealeana (strain ATCC 700345 / ANG-SQ1), this protein is Threonylcarbamoyl-AMP synthase.